Consider the following 447-residue polypeptide: Blue-light photoreceptor PHR2 (447 aa).

A compositionally biased stretch (polar residues) spans 1-14 (MDSSNVEENLNPET). Residues 1–20 (MDSSNVEENLNPETKSAEEQ) form a disordered region. Positions 115-249 (RAAVVWFRND…EVKYFWGSTL (135 aa)) constitute a Photolyase/cryptochrome alpha/beta domain.

Belongs to the DNA photolyase class-1 family. It depends on FAD as a cofactor.

This is Blue-light photoreceptor PHR2 (PHR2) from Arabidopsis thaliana (Mouse-ear cress).